We begin with the raw amino-acid sequence, 179 residues long: Orotate phosphoribosyltransferase (179 aa).

5-phospho-alpha-D-ribose 1-diphosphate-binding positions include Arg94, Lys95, Lys98, His100, and 120 to 128 (EDTSTTGAS). Thr124 and Arg152 together coordinate orotate.

It belongs to the purine/pyrimidine phosphoribosyltransferase family. PyrE subfamily. Homodimer. It depends on Mg(2+) as a cofactor.

It carries out the reaction orotidine 5'-phosphate + diphosphate = orotate + 5-phospho-alpha-D-ribose 1-diphosphate. The protein operates within pyrimidine metabolism; UMP biosynthesis via de novo pathway; UMP from orotate: step 1/2. Catalyzes the transfer of a ribosyl phosphate group from 5-phosphoribose 1-diphosphate to orotate, leading to the formation of orotidine monophosphate (OMP). The sequence is that of Orotate phosphoribosyltransferase from Mycobacterium leprae (strain TN).